Consider the following 170-residue polypeptide: M-agglutinin (170 aa).

An N-terminal signal peptide occupies residues 1–24 (MNLKKIAIASSVFAGITMALTCHA).

This protein is a non-fimbrial hemagglutinin that is specific for blood group M. This is M-agglutinin (bmaE) from Escherichia coli.